A 495-amino-acid chain; its full sequence is Transcription termination/antitermination protein NusA (495 aa).

Residues 135–200 (GQIITGIVKK…RGAQLFLSRS (66 aa)) form the S1 motif domain. The region spanning 302–370 (HHTMDIAVDS…KNLNVSEKVI (69 aa)) is the KH domain. Repeat copies occupy residues 364 to 414 (NVSE…KNGL) and 439 to 489 (GMNE…RNIC). The segment at 364-489 (NVSEKVIKTL…LLIMAARNIC (126 aa)) is 2 X 51 AA approximate repeats.

It belongs to the NusA family. Monomer. Binds directly to the core enzyme of the DNA-dependent RNA polymerase and to nascent RNA.

The protein resides in the cytoplasm. In terms of biological role, participates in both transcription termination and antitermination. The sequence is that of Transcription termination/antitermination protein NusA from Buchnera aphidicola subsp. Schizaphis graminum (strain Sg).